The sequence spans 302 residues: Phosphoribosylaminoimidazole-succinocarboxamide synthase (302 aa).

It belongs to the SAICAR synthetase family.

It carries out the reaction 5-amino-1-(5-phospho-D-ribosyl)imidazole-4-carboxylate + L-aspartate + ATP = (2S)-2-[5-amino-1-(5-phospho-beta-D-ribosyl)imidazole-4-carboxamido]succinate + ADP + phosphate + 2 H(+). Its pathway is purine metabolism; IMP biosynthesis via de novo pathway; 5-amino-1-(5-phospho-D-ribosyl)imidazole-4-carboxamide from 5-amino-1-(5-phospho-D-ribosyl)imidazole-4-carboxylate: step 1/2. The protein is Phosphoribosylaminoimidazole-succinocarboxamide synthase of Cupriavidus metallidurans (strain ATCC 43123 / DSM 2839 / NBRC 102507 / CH34) (Ralstonia metallidurans).